A 470-amino-acid chain; its full sequence is Glutamate--tRNA ligase 1 (470 aa).

Positions 8–18 (PSPTGYLHVGG) match the 'HIGH' region motif. The 'KMSKS' region signature appears at 250 to 254 (KLSKR). Lys-253 is a binding site for ATP.

It belongs to the class-I aminoacyl-tRNA synthetase family. Glutamate--tRNA ligase type 1 subfamily. Monomer.

It localises to the cytoplasm. It catalyses the reaction tRNA(Glu) + L-glutamate + ATP = L-glutamyl-tRNA(Glu) + AMP + diphosphate. Catalyzes the attachment of glutamate to tRNA(Glu) in a two-step reaction: glutamate is first activated by ATP to form Glu-AMP and then transferred to the acceptor end of tRNA(Glu). The chain is Glutamate--tRNA ligase 1 from Pseudothermotoga lettingae (strain ATCC BAA-301 / DSM 14385 / NBRC 107922 / TMO) (Thermotoga lettingae).